The primary structure comprises 373 residues: Chorismate synthase (373 aa).

Residue Arg-46 participates in NADP(+) binding. FMN-binding positions include Arg-123–Ser-125, Asn-251–Ala-252, Gly-295, Lys-310–Ser-314, and Arg-337.

The protein belongs to the chorismate synthase family. FMNH2 serves as cofactor.

It catalyses the reaction 5-O-(1-carboxyvinyl)-3-phosphoshikimate = chorismate + phosphate. It functions in the pathway metabolic intermediate biosynthesis; chorismate biosynthesis; chorismate from D-erythrose 4-phosphate and phosphoenolpyruvate: step 7/7. In terms of biological role, catalyzes the anti-1,4-elimination of the C-3 phosphate and the C-6 proR hydrogen from 5-enolpyruvylshikimate-3-phosphate (EPSP) to yield chorismate, which is the branch point compound that serves as the starting substrate for the three terminal pathways of aromatic amino acid biosynthesis. This reaction introduces a second double bond into the aromatic ring system. The chain is Chorismate synthase from Methanococcus maripaludis (strain C5 / ATCC BAA-1333).